The following is a 1356-amino-acid chain: DNA-directed RNA polymerase subunit beta (1356 aa).

The protein belongs to the RNA polymerase beta chain family. In terms of assembly, the RNAP catalytic core consists of 2 alpha, 1 beta, 1 beta' and 1 omega subunit. When a sigma factor is associated with the core the holoenzyme is formed, which can initiate transcription.

The enzyme catalyses RNA(n) + a ribonucleoside 5'-triphosphate = RNA(n+1) + diphosphate. DNA-dependent RNA polymerase catalyzes the transcription of DNA into RNA using the four ribonucleoside triphosphates as substrates. This Stutzerimonas stutzeri (strain A1501) (Pseudomonas stutzeri) protein is DNA-directed RNA polymerase subunit beta.